We begin with the raw amino-acid sequence, 427 residues long: UDP-N-acetylglucosamine 1-carboxyvinyltransferase (427 aa).

24–25 (KN) is a binding site for phosphoenolpyruvate. Arg-95 serves as a coordination point for UDP-N-acetyl-alpha-D-glucosamine. Cys-119 acts as the Proton donor in catalysis. Cys-119 bears the 2-(S-cysteinyl)pyruvic acid O-phosphothioketal mark. UDP-N-acetyl-alpha-D-glucosamine contacts are provided by residues 124–128 (RPVDQ), Asp-308, and Val-330.

The protein belongs to the EPSP synthase family. MurA subfamily.

It localises to the cytoplasm. The catalysed reaction is phosphoenolpyruvate + UDP-N-acetyl-alpha-D-glucosamine = UDP-N-acetyl-3-O-(1-carboxyvinyl)-alpha-D-glucosamine + phosphate. The protein operates within cell wall biogenesis; peptidoglycan biosynthesis. Functionally, cell wall formation. Adds enolpyruvyl to UDP-N-acetylglucosamine. This is UDP-N-acetylglucosamine 1-carboxyvinyltransferase from Deinococcus geothermalis (strain DSM 11300 / CIP 105573 / AG-3a).